A 271-amino-acid chain; its full sequence is Zinc finger protein 501 (271 aa).

9 C2H2-type zinc fingers span residues 22–44, 50–72, 78–100, 106–128, 134–156, 162–184, 190–212, 218–240, and 246–268; these read SKCS…QRIH, YVCS…LRIH, YKCN…LRIH, YKCN…QRIH, YKCA…QRSH, FKCN…QRIH, YTCT…ERTH, YKCS…YRIH, and YECF…QRLH.

It belongs to the krueppel C2H2-type zinc-finger protein family.

It localises to the nucleus. Its subcellular location is the nucleolus. May be involved in transcriptional regulation. Essential for Golgi structural integrity. In Pongo abelii (Sumatran orangutan), this protein is Zinc finger protein 501 (ZNF501).